The chain runs to 176 residues: ATP-dependent protease subunit HslV (176 aa).

Residue Thr5 is part of the active site. Na(+)-binding residues include Ser161, Cys164, and Thr167.

This sequence belongs to the peptidase T1B family. HslV subfamily. In terms of assembly, a double ring-shaped homohexamer of HslV is capped on each side by a ring-shaped HslU homohexamer. The assembly of the HslU/HslV complex is dependent on binding of ATP.

It is found in the cytoplasm. It catalyses the reaction ATP-dependent cleavage of peptide bonds with broad specificity.. Its activity is regulated as follows. Allosterically activated by HslU binding. Functionally, protease subunit of a proteasome-like degradation complex believed to be a general protein degrading machinery. The sequence is that of ATP-dependent protease subunit HslV from Caldanaerobacter subterraneus subsp. tengcongensis (strain DSM 15242 / JCM 11007 / NBRC 100824 / MB4) (Thermoanaerobacter tengcongensis).